A 474-amino-acid chain; its full sequence is DNA damage checkpoint control protein MEC3 (474 aa).

Serine 452 is subject to Phosphoserine.

The protein belongs to the MEC3 family. Component of the checkpoint clamp complex composed of DDC1, MEC3 and RAD17. The interaction with MEC3 is performed in a RAD17-dependent manner. The checkpoint clamp complex loads onto DNA. Interacts with the DNA polymerase zeta subunit REV7. Also forms a heterotrimer with 2 RAD17 subunits. Interacts with SET1.

It is found in the nucleus. In terms of biological role, component of the checkpoint clamp complex involved in the surveillance mechanism that allows the DNA repair pathways to act to restore the integrity of the DNA prior to DNA synthesis or separation of the replicated chromosomes. Associates with sites of DNA damage and modulates the MEC1 signaling pathway and the activation of RAD53 in response to DNA damage at phase G1. The complex also physically regulates DNA polymerase zeta-dependent mutagenesis by controlling the access of polymerase zeta to damaged DNA. In Saccharomyces cerevisiae (strain ATCC 204508 / S288c) (Baker's yeast), this protein is DNA damage checkpoint control protein MEC3 (MEC3).